The following is a 314-amino-acid chain: Methionyl-tRNA formyltransferase (314 aa).

110–113 (SLLP) contributes to the (6S)-5,6,7,8-tetrahydrofolate binding site.

Belongs to the Fmt family.

The catalysed reaction is L-methionyl-tRNA(fMet) + (6R)-10-formyltetrahydrofolate = N-formyl-L-methionyl-tRNA(fMet) + (6S)-5,6,7,8-tetrahydrofolate + H(+). In terms of biological role, attaches a formyl group to the free amino group of methionyl-tRNA(fMet). The formyl group appears to play a dual role in the initiator identity of N-formylmethionyl-tRNA by promoting its recognition by IF2 and preventing the misappropriation of this tRNA by the elongation apparatus. The sequence is that of Methionyl-tRNA formyltransferase from Bacillus thuringiensis subsp. konkukian (strain 97-27).